The sequence spans 364 residues: MEQNTDNVFNFSAGPAALPKAVMQQAQQELIDWQGLGTSVMEISHRSKEFIKVAQEAEQDLRDLLNIPDNYKVLFCQGGARAQFAAVPLNLLGDAETATYIDGGYWAESAVEEAKKYCEPDVFDAKTEIDGKVAVLPASEWKIAPEAAYVHFCPNETIDGIEINDLPITDKPIVADMSSTILSREIDVSKYGVIYAGAQKNIGPSGIAIAIVRDDLLGMAKQVLPSILDYKVLAEKESMFNTPPTFAWYLSGLVFKWLKAQGGVKSIETVNREKAKLLYDYIDQSDFYRNGVHPSNRSLMNVPFQLAKPELDATFLELADAKGLKALKGHRVVGGMRASIYNAMPLEGVQALVDFMKEFEQNYA.

Position 46 (Arg-46) interacts with L-glutamate. Pyridoxal 5'-phosphate is bound by residues 80–81 (AR), Trp-106, Thr-157, Asp-176, and Gln-199. Lys-200 is subject to N6-(pyridoxal phosphate)lysine. Pyridoxal 5'-phosphate is bound at residue 241–242 (NT).

It belongs to the class-V pyridoxal-phosphate-dependent aminotransferase family. SerC subfamily. Homodimer. Requires pyridoxal 5'-phosphate as cofactor.

It is found in the cytoplasm. It carries out the reaction O-phospho-L-serine + 2-oxoglutarate = 3-phosphooxypyruvate + L-glutamate. It catalyses the reaction 4-(phosphooxy)-L-threonine + 2-oxoglutarate = (R)-3-hydroxy-2-oxo-4-phosphooxybutanoate + L-glutamate. Its pathway is amino-acid biosynthesis; L-serine biosynthesis; L-serine from 3-phospho-D-glycerate: step 2/3. The protein operates within cofactor biosynthesis; pyridoxine 5'-phosphate biosynthesis; pyridoxine 5'-phosphate from D-erythrose 4-phosphate: step 3/5. Its function is as follows. Catalyzes the reversible conversion of 3-phosphohydroxypyruvate to phosphoserine and of 3-hydroxy-2-oxo-4-phosphonooxybutanoate to phosphohydroxythreonine. In Vibrio parahaemolyticus serotype O3:K6 (strain RIMD 2210633), this protein is Phosphoserine aminotransferase.